The chain runs to 141 residues: Large ribosomal subunit protein uL16 (141 aa).

The disordered stretch occupies residues 1-23; the sequence is MLMPKRTKWRKQQKGRNRGKSFR.

This sequence belongs to the universal ribosomal protein uL16 family. In terms of assembly, part of the 50S ribosomal subunit.

In terms of biological role, binds 23S rRNA and is also seen to make contacts with the A and possibly P site tRNAs. The protein is Large ribosomal subunit protein uL16 of Sulfurovum sp. (strain NBC37-1).